We begin with the raw amino-acid sequence, 377 residues long: Endoplasmic reticulum-Golgi intermediate compartment protein 2 (377 aa).

The Cytoplasmic portion of the chain corresponds to 1-33 (MRRLNRKKTLSLVKELDAFPKVPESYVETSASG). A helical membrane pass occupies residues 34 to 54 (GTVSLIAFTTMALLTIMEFSV). The Lumenal segment spans residues 55–319 (YQDTWMKYEY…PFWQFFVRLC (265 aa)). A helical transmembrane segment spans residues 320 to 340 (GIVGGIFSTTGMLHGIGKFIV). At 341 to 377 (EIICCRFRLGSYKPVNSVPFEDGHTDNHLPLLENNTH) the chain is on the cytoplasmic side.

Belongs to the ERGIC family. As to quaternary structure, may form a heteromeric complex composed of ERGIC1, ERGIC2 and ERGIC3. Interacts with ERGIC3, the interaction is required for the stable expression of both proteins. May interact with EEF1A1. Ubiquitously expressed.

It is found in the endoplasmic reticulum-Golgi intermediate compartment membrane. The protein localises to the golgi apparatus. Its subcellular location is the cis-Golgi network membrane. It localises to the endoplasmic reticulum membrane. The protein resides in the cytoplasm. It is found in the nucleus. In terms of biological role, possible role in transport between endoplasmic reticulum and Golgi. The polypeptide is Endoplasmic reticulum-Golgi intermediate compartment protein 2 (ERGIC2) (Homo sapiens (Human)).